The following is a 273-amino-acid chain: Dermonecrotic toxin LapSicTox-alphaIB1b3 (273 aa).

Residue His5 is part of the active site. Positions 25 and 27 each coordinate Mg(2+). His41 serves as the catalytic Nucleophile. Intrachain disulfides connect Cys45/Cys51 and Cys47/Cys190. A Mg(2+)-binding site is contributed by Asp85. Residue Asn250 is glycosylated (N-linked (GlcNAc...) asparagine).

Belongs to the arthropod phospholipase D family. Class II subfamily. Mg(2+) is required as a cofactor. In terms of tissue distribution, expressed by the venom gland.

The protein localises to the secreted. The catalysed reaction is an N-(acyl)-sphingosylphosphocholine = an N-(acyl)-sphingosyl-1,3-cyclic phosphate + choline. The enzyme catalyses an N-(acyl)-sphingosylphosphoethanolamine = an N-(acyl)-sphingosyl-1,3-cyclic phosphate + ethanolamine. It carries out the reaction a 1-acyl-sn-glycero-3-phosphocholine = a 1-acyl-sn-glycero-2,3-cyclic phosphate + choline. It catalyses the reaction a 1-acyl-sn-glycero-3-phosphoethanolamine = a 1-acyl-sn-glycero-2,3-cyclic phosphate + ethanolamine. Functionally, dermonecrotic toxins cleave the phosphodiester linkage between the phosphate and headgroup of certain phospholipids (sphingolipid and lysolipid substrates), forming an alcohol (often choline) and a cyclic phosphate. This toxin acts on sphingomyelin (SM). It may also act on ceramide phosphoethanolamine (CPE), lysophosphatidylcholine (LPC) and lysophosphatidylethanolamine (LPE), but not on lysophosphatidylserine (LPS), and lysophosphatidylglycerol (LPG). It acts by transphosphatidylation, releasing exclusively cyclic phosphate products as second products. Induces dermonecrosis, hemolysis, increased vascular permeability, edema, inflammatory response, and platelet aggregation. The sequence is that of Dermonecrotic toxin LapSicTox-alphaIB1b3 from Loxosceles apachea (Apache recluse spider).